The primary structure comprises 789 residues: Disintegrin and metalloproteinase domain-containing protein 1 (789 aa).

The signal sequence occupies residues 1–68; that stretch reads MSVAASASRS…LLIFLPSTLC (68 aa). Positions 238 to 432 constitute a Peptidase M12B domain; that stretch reads KYVEMFVVVN…HRGACLLDRP (195 aa). Asparagine 259 is a glycosylation site (N-linked (GlcNAc...) asparagine). 4 disulfides stabilise this stretch: cysteine 348–cysteine 427, cysteine 388–cysteine 411, cysteine 390–cysteine 396, and cysteine 497–cysteine 517. Histidine 373 contacts Zn(2+). Glutamate 374 is an active-site residue. Residues histidine 377 and histidine 383 each coordinate Zn(2+). N-linked (GlcNAc...) asparagine glycosylation is present at asparagine 410. A Disintegrin domain is found at 441-525; it reads DAHCGNGVVE…ECPANSYMQD (85 aa). An N-linked (GlcNAc...) asparagine glycan is attached at asparagine 633. The 35-residue stretch at 666 to 700 folds into the EGF-like domain; sequence LQYDCHPQEMCHGNGVCNNFKHCHCDAGFSPPDCS. 3 disulfide bridges follow: cysteine 670–cysteine 682, cysteine 676–cysteine 688, and cysteine 690–cysteine 699. The N-linked (GlcNAc...) asparagine glycan is linked to asparagine 720. A helical transmembrane segment spans residues 743 to 763; sequence VVVLVVPIFLIVLLCCLMLIA. At 764-789 the chain is on the cytoplasmic side; the sequence is YLWSEVQEAVSPGSSSTTSSSESESD.

In terms of assembly, heterodimer with ADAM2/fertilin subunit beta.

It localises to the membrane. Functionally, may be involved in sperm-egg fusion. The sequence is that of Disintegrin and metalloproteinase domain-containing protein 1 (Adam1) from Rattus norvegicus (Rat).